Here is a 164-residue protein sequence, read N- to C-terminus: MNIDNDLRRIALQEQQLQFERFDLDTAWKLGATLRRMAGERKLGCVIDITLYSMQVFYAALDGATPDNPNWVRRKRNTVFRLFKSSYATGLSLLKQQTNLQAKLGLPDAEFAAHGGSFPIVVKGTGCIGAVTVSGLPQREDHNLVVEALAELLGADHDALKLES.

It belongs to the UPF0303 family.

This is UPF0303 protein R02983 from Rhizobium meliloti (strain 1021) (Ensifer meliloti).